A 208-amino-acid chain; its full sequence is Pyridoxine/pyridoxamine 5'-phosphate oxidase (208 aa).

Residues 53–58 (RTVLLK), 68–69 (YS), lysine 75, and glutamine 100 each bind FMN. Position 58 (lysine 58) interacts with substrate. Residues tyrosine 118, arginine 122, and serine 126 each contribute to the substrate site. Residues 135–136 (QS) and tryptophan 180 contribute to the FMN site. Substrate is bound at residue 186–188 (RLH). Arginine 190 contacts FMN.

This sequence belongs to the pyridoxamine 5'-phosphate oxidase family. Homodimer. The cofactor is FMN.

It carries out the reaction pyridoxamine 5'-phosphate + O2 + H2O = pyridoxal 5'-phosphate + H2O2 + NH4(+). The enzyme catalyses pyridoxine 5'-phosphate + O2 = pyridoxal 5'-phosphate + H2O2. The protein operates within cofactor metabolism; pyridoxal 5'-phosphate salvage; pyridoxal 5'-phosphate from pyridoxamine 5'-phosphate: step 1/1. Its pathway is cofactor metabolism; pyridoxal 5'-phosphate salvage; pyridoxal 5'-phosphate from pyridoxine 5'-phosphate: step 1/1. Its function is as follows. Catalyzes the oxidation of either pyridoxine 5'-phosphate (PNP) or pyridoxamine 5'-phosphate (PMP) into pyridoxal 5'-phosphate (PLP). This Xylella fastidiosa (strain Temecula1 / ATCC 700964) protein is Pyridoxine/pyridoxamine 5'-phosphate oxidase.